Consider the following 121-residue polypeptide: Cell division protein FtsB (121 aa).

Residues 1–6 (MRNWRW) lie on the Cytoplasmic side of the membrane. Residues 7 to 24 (LLLVLAVLLAWLQYRFWF) traverse the membrane as a helical segment. Over 25-121 (GPGNSGEVMM…PEPIDPVDHP (97 aa)) the chain is Periplasmic. Positions 31–66 (EVMMLEAQVAHQTQDNEGLRQRNQALAAEVKDLKDG) form a coiled coil. The tract at residues 92-121 (EDAPLPAPASPEAPAPPQQAPEPIDPVDHP) is disordered. Positions 96–115 (LPAPASPEAPAPPQQAPEPI) are enriched in pro residues.

Belongs to the FtsB family. Part of a complex composed of FtsB, FtsL and FtsQ.

The protein resides in the cell inner membrane. Its function is as follows. Essential cell division protein. May link together the upstream cell division proteins, which are predominantly cytoplasmic, with the downstream cell division proteins, which are predominantly periplasmic. This is Cell division protein FtsB from Xanthomonas euvesicatoria pv. vesicatoria (strain 85-10) (Xanthomonas campestris pv. vesicatoria).